The sequence spans 200 residues: 3-isopropylmalate dehydratase small subunit (200 aa).

It belongs to the LeuD family. LeuD type 1 subfamily. As to quaternary structure, heterodimer of LeuC and LeuD.

It carries out the reaction (2R,3S)-3-isopropylmalate = (2S)-2-isopropylmalate. The protein operates within amino-acid biosynthesis; L-leucine biosynthesis; L-leucine from 3-methyl-2-oxobutanoate: step 2/4. Functionally, catalyzes the isomerization between 2-isopropylmalate and 3-isopropylmalate, via the formation of 2-isopropylmaleate. In Vibrio vulnificus (strain YJ016), this protein is 3-isopropylmalate dehydratase small subunit.